The sequence spans 70 residues: Protein SlyX homolog (70 aa).

It belongs to the SlyX family.

The chain is Protein SlyX homolog from Shewanella piezotolerans (strain WP3 / JCM 13877).